An 82-amino-acid polypeptide reads, in one-letter code: Small ribosomal subunit protein bS18 (82 aa).

Belongs to the bacterial ribosomal protein bS18 family. Part of the 30S ribosomal subunit. Forms a tight heterodimer with protein bS6.

Functionally, binds as a heterodimer with protein bS6 to the central domain of the 16S rRNA, where it helps stabilize the platform of the 30S subunit. This Rhizobium rhizogenes (strain K84 / ATCC BAA-868) (Agrobacterium radiobacter) protein is Small ribosomal subunit protein bS18.